A 158-amino-acid chain; its full sequence is Ribosomal RNA large subunit methyltransferase H (158 aa).

S-adenosyl-L-methionine is bound by residues L73, G107, and 126–131 (FGEITL).

The protein belongs to the RNA methyltransferase RlmH family. In terms of assembly, homodimer.

It is found in the cytoplasm. It carries out the reaction pseudouridine(1915) in 23S rRNA + S-adenosyl-L-methionine = N(3)-methylpseudouridine(1915) in 23S rRNA + S-adenosyl-L-homocysteine + H(+). Its function is as follows. Specifically methylates the pseudouridine at position 1915 (m3Psi1915) in 23S rRNA. This chain is Ribosomal RNA large subunit methyltransferase H, found in Rubrobacter xylanophilus (strain DSM 9941 / JCM 11954 / NBRC 16129 / PRD-1).